A 184-amino-acid chain; its full sequence is uncharacterized protein (184 aa).

This is an uncharacterized protein from Dictyostelium discoideum (Social amoeba).